Reading from the N-terminus, the 20-residue chain is Brevinin-1DYa (20 aa).

Cys-14 and Cys-20 are disulfide-bonded.

As to expression, expressed by the skin glands.

The protein resides in the secreted. In terms of biological role, antimicrobial peptide. Has low activity against the Gram-positive bacterium S.aureus and the Gram-negative bacterium E.coli (MIC&lt;15 uM). Has a strong hemolytic activity. This Rana dybowskii (Dybovsky's frog) protein is Brevinin-1DYa.